Reading from the N-terminus, the 310-residue chain is Ribosomal RNA small subunit methyltransferase H (310 aa).

S-adenosyl-L-methionine-binding positions include Gly-32–His-34, Asp-52, Phe-79, Asp-100, and Gln-107.

It belongs to the methyltransferase superfamily. RsmH family.

The protein resides in the cytoplasm. The catalysed reaction is cytidine(1402) in 16S rRNA + S-adenosyl-L-methionine = N(4)-methylcytidine(1402) in 16S rRNA + S-adenosyl-L-homocysteine + H(+). In terms of biological role, specifically methylates the N4 position of cytidine in position 1402 (C1402) of 16S rRNA. The sequence is that of Ribosomal RNA small subunit methyltransferase H from Bacillus cereus (strain B4264).